Consider the following 444-residue polypeptide: NADH-quinone oxidoreductase subunit F (444 aa).

62 to 71 (GRGGAGFLTG) contacts NAD(+). Position 177-224 (177-224 (GAGRYICGEETALINSLEGRRANPRFKPPFPAYVGLWGKPTCVNNVET)) interacts with FMN. [4Fe-4S] cluster-binding residues include cysteine 354, cysteine 357, cysteine 360, and cysteine 401.

The protein belongs to the complex I 51 kDa subunit family. Composed of 13 different subunits. Subunits NuoCD, E, F, and G constitute the peripheral sector of the complex. [4Fe-4S] cluster is required as a cofactor. Requires FMN as cofactor.

The catalysed reaction is a quinone + NADH + 5 H(+)(in) = a quinol + NAD(+) + 4 H(+)(out). In terms of biological role, NDH-1 shuttles electrons from NADH, via FMN and iron-sulfur (Fe-S) centers, to quinones in the respiratory chain. Couples the redox reaction to proton translocation (for every two electrons transferred, four hydrogen ions are translocated across the cytoplasmic membrane), and thus conserves the redox energy in a proton gradient. The polypeptide is NADH-quinone oxidoreductase subunit F (nuoF) (Buchnera aphidicola subsp. Baizongia pistaciae (strain Bp)).